Here is a 529-residue protein sequence, read N- to C-terminus: UDP-glycosyltransferase (529 aa).

N-linked (GlcNAc...) asparagine glycosylation is found at N70 and N420. Residues 504-524 (LDLYLVYIALFAVPVGAVRWI) traverse the membrane as a helical segment.

Belongs to the glycosyltransferase 28 family.

The protein resides in the membrane. The catalysed reaction is stromemycin aglycone + UDP-alpha-D-glucose = stromemycin + UDP + H(+). It participates in mycotoxin biosynthesis. In terms of biological role, UDP-glycosyltransferase; part of the gene cluster that mediates the biosynthesis of stromemycin, a depside C-glucoside with two unsaturated C9 side chains belonging to aromatic polyketide glycosides. Acts as the tailoring enzyme responsible for 3-C-glucosylation of bininalkenylresorcylic acid to yield stromemycin. The polypeptide is UDP-glycosyltransferase (Talaromyces amestolkiae).